The sequence spans 164 residues: Phosphopantetheine adenylyltransferase (164 aa).

Thr-10 provides a ligand contact to substrate. Residues 10-11 (TF) and His-18 each bind ATP. Substrate is bound by residues Lys-42, Leu-74, and Arg-88. ATP contacts are provided by residues 89–91 (GIR), Glu-99, and 124–130 (YAFVSST).

The protein belongs to the bacterial CoaD family. Homohexamer. Mg(2+) is required as a cofactor.

The protein localises to the cytoplasm. The catalysed reaction is (R)-4'-phosphopantetheine + ATP + H(+) = 3'-dephospho-CoA + diphosphate. The protein operates within cofactor biosynthesis; coenzyme A biosynthesis; CoA from (R)-pantothenate: step 4/5. Functionally, reversibly transfers an adenylyl group from ATP to 4'-phosphopantetheine, yielding dephospho-CoA (dPCoA) and pyrophosphate. This is Phosphopantetheine adenylyltransferase from Tolumonas auensis (strain DSM 9187 / NBRC 110442 / TA 4).